The following is a 309-amino-acid chain: Zinc finger CCCH domain-containing protein 31 (309 aa).

The segment at 1–36 (MEGAGAARKRSRPDTANGGAAGGKRSRETESFQTGL) is disordered. 2 C3H1-type zinc fingers span residues 37–65 (SSKL…HFVP) and 103–131 (SGKT…HGER). Residues 86–106 (ARAPMDHAAGGNSHPASSGKT) are disordered. The 65-residue stretch at 175-239 (SATAKISVDA…DQIKQASNMV (65 aa)) folds into the KH domain. Positions 249 to 273 (STPAKKPAGSAAGAAPAGRGGPGGR) are disordered. Residues 251–265 (PAKKPAGSAAGAAPA) are compositionally biased toward low complexity. The segment at 275–302 (NYKTKLCENFVKGTCTFGDRCHFAHGEN) adopts a C3H1-type 3 zinc-finger fold.

This is Zinc finger CCCH domain-containing protein 31 from Oryza sativa subsp. japonica (Rice).